Here is a 158-residue protein sequence, read N- to C-terminus: uncharacterized protein (158 aa).

This is an uncharacterized protein from Saccharolobus islandicus (Sulfolobus islandicus).